Consider the following 445-residue polypeptide: Tubulin beta-4B chain (445 aa).

Residues Met1–Ile4 carry the MREI motif motif. A GTP-binding site is contributed by Gln11. Thr55 is subject to Phosphothreonine. An N6-acetyllysine modification is found at Lys58. Residues Glu69, Ser138, Gly142, Thr143, and Gly144 each coordinate GTP. Glu69 contacts Mg(2+). Position 172 is a phosphoserine; by CDK1 (Ser172). Positions 204 and 226 each coordinate GTP. The interval Gln426 to Ala445 is disordered. The segment covering Thr429–Ala445 has biased composition (acidic residues). 5-glutamyl polyglutamate is present on Glu438.

The protein belongs to the tubulin family. As to quaternary structure, dimer of alpha and beta chains. A typical microtubule is a hollow water-filled tube with an outer diameter of 25 nm and an inner diameter of 15 nM. Alpha-beta heterodimers associate head-to-tail to form protofilaments running lengthwise along the microtubule wall with the beta-tubulin subunit facing the microtubule plus end conferring a structural polarity. Microtubules usually have 13 protofilaments but different protofilament numbers can be found in some organisms and specialized cells. Component of sperm flagellar doublet microtubules. The cofactor is Mg(2+). Some glutamate residues at the C-terminus are polyglycylated, resulting in polyglycine chains on the gamma-carboxyl group. Glycylation is mainly limited to tubulin incorporated into axonemes (cilia and flagella) whereas glutamylation is prevalent in neuronal cells, centrioles, axonemes, and the mitotic spindle. Both modifications can coexist on the same protein on adjacent residues, and lowering polyglycylation levels increases polyglutamylation, and reciprocally. Cilia and flagella glycylation is required for their stability and maintenance. Flagella glycylation controls sperm motility. In terms of processing, some glutamate residues at the C-terminus are polyglutamylated, resulting in polyglutamate chains on the gamma-carboxyl group. Polyglutamylation plays a key role in microtubule severing by spastin (SPAST). SPAST preferentially recognizes and acts on microtubules decorated with short polyglutamate tails: severing activity by SPAST increases as the number of glutamates per tubulin rises from one to eight, but decreases beyond this glutamylation threshold. Glutamylation is also involved in cilia motility. Post-translationally, phosphorylated on Ser-172 by CDK1 during the cell cycle, from metaphase to telophase, but not in interphase. This phosphorylation inhibits tubulin incorporation into microtubules.

It localises to the cytoplasm. The protein resides in the cytoskeleton. Its subcellular location is the flagellum axoneme. In terms of biological role, tubulin is the major constituent of microtubules, a cylinder consisting of laterally associated linear protofilaments composed of alpha- and beta-tubulin heterodimers. Microtubules grow by the addition of GTP-tubulin dimers to the microtubule end, where a stabilizing cap forms. Below the cap, tubulin dimers are in GDP-bound state, owing to GTPase activity of alpha-tubulin. The chain is Tubulin beta-4B chain (TUBB4B) from Bos taurus (Bovine).